We begin with the raw amino-acid sequence, 87 residues long: Cell division topological specificity factor (87 aa).

The protein belongs to the MinE family.

Prevents the cell division inhibition by proteins MinC and MinD at internal division sites while permitting inhibition at polar sites. This ensures cell division at the proper site by restricting the formation of a division septum at the midpoint of the long axis of the cell. The chain is Cell division topological specificity factor from Blochmanniella pennsylvanica (strain BPEN).